We begin with the raw amino-acid sequence, 262 residues long: Probable carboxylesterase Culp3 (262 aa).

An N-terminal signal peptide occupies residues 1 to 41; it reads MNNRPIRLLTSGRAGLGAGALITAVVLLIALGAVWTPVAFA. The cysteines at positions 44 and 114 are disulfide-linked. The Nucleophile role is filled by S125. Residues C188 and C195 are joined by a disulfide bond. Residue D192 is part of the active site. Residue H206 is the Proton donor/acceptor of the active site. A disordered region spans residues 241–262; it reads LPGSVLQMPGTAAPAPESLHGR.

It belongs to the cutinase family.

It is found in the secreted. Functionally, shows weak esterase activity with the p-nitrophenol-linked aliphatic ester pNP-butyrate. Does not exhibit cutinase activity. The polypeptide is Probable carboxylesterase Culp3 (cut3) (Mycobacterium tuberculosis (strain ATCC 25618 / H37Rv)).